The sequence spans 474 residues: ATP synthase subunit beta (474 aa).

151–158 (GGAGVGKT) is an ATP binding site.

This sequence belongs to the ATPase alpha/beta chains family. As to quaternary structure, F-type ATPases have 2 components, CF(1) - the catalytic core - and CF(0) - the membrane proton channel. CF(1) has five subunits: alpha(3), beta(3), gamma(1), delta(1), epsilon(1). CF(0) has four main subunits: a(1), b(1), b'(1) and c(9-12).

It localises to the cell inner membrane. The enzyme catalyses ATP + H2O + 4 H(+)(in) = ADP + phosphate + 5 H(+)(out). In terms of biological role, produces ATP from ADP in the presence of a proton gradient across the membrane. The catalytic sites are hosted primarily by the beta subunits. This is ATP synthase subunit beta from Jannaschia sp. (strain CCS1).